Here is a 302-residue protein sequence, read N- to C-terminus: Cyclin-dependent kinase 1-B (302 aa).

The 284-residue stretch at 4–287 (YTKIEKIGEG…ARKAMLHPYF (284 aa)) folds into the Protein kinase domain. ATP contacts are provided by residues 10–18 (IGEGTYGVV) and Lys33. Thr14 is modified (phosphothreonine). Tyr15 carries the phosphotyrosine; by wee1 and wee2 modification. Asp128 serves as the catalytic Proton acceptor. Thr161 is subject to Phosphothreonine; by cak. Ser277 bears the Phosphoserine mark.

It belongs to the protein kinase superfamily. CMGC Ser/Thr protein kinase family. CDC2/CDKX subfamily. In terms of assembly, forms a stable but non-covalent complex with a regulatory subunit and with a cyclin. Interacts with spdya. Post-translationally, phosphorylation at Tyr-15 by wee1 and wee2 inhibits the protein kinase activity and acts negative regulator of entry into mitosis (G2 to M transition).

It localises to the nucleus. It catalyses the reaction L-seryl-[protein] + ATP = O-phospho-L-seryl-[protein] + ADP + H(+). The catalysed reaction is L-threonyl-[protein] + ATP = O-phospho-L-threonyl-[protein] + ADP + H(+). The enzyme catalyses [DNA-directed RNA polymerase] + ATP = phospho-[DNA-directed RNA polymerase] + ADP + H(+). Phosphorylation at Thr-14 or Tyr-15 inactivates the enzyme, while phosphorylation at Thr-161 activates it. Plays a key role in the control of the eukaryotic cell cycle by modulating the centrosome cycle as well as mitotic onset; promotes G2-M transition via association with multiple interphase cyclins. During G2 and early mitosis, CDC25A/B/C-mediated dephosphorylation activates CDK1/cyclin complexes which phosphorylate several substrates that trigger at least centrosome separation, Golgi dynamics, nuclear envelope breakdown and chromosome condensation. Once chromosomes are condensed and aligned at the metaphase plate, CDK1 activity is switched off by WEE1- and PKMYT1-mediated phosphorylation to allow sister chromatid separation, chromosome decondensation, reformation of the nuclear envelope and cytokinesis. Catalyzes lamin (LMNA, LMNB1 and LMNB2) phosphorylation at the onset of mitosis, promoting nuclear envelope breakdown. The polypeptide is Cyclin-dependent kinase 1-B (cdk1-b) (Xenopus laevis (African clawed frog)).